A 103-amino-acid chain; its full sequence is Large ribosomal subunit protein bL28 (103 aa).

The protein belongs to the bacterial ribosomal protein bL28 family.

The protein is Large ribosomal subunit protein bL28 of Anaplasma phagocytophilum (strain HZ).